The primary structure comprises 302 residues: Probable 5-dehydro-4-deoxyglucarate dehydratase (302 aa).

This sequence belongs to the DapA family.

The enzyme catalyses 5-dehydro-4-deoxy-D-glucarate + H(+) = 2,5-dioxopentanoate + CO2 + H2O. The protein operates within carbohydrate acid metabolism; D-glucarate degradation; 2,5-dioxopentanoate from D-glucarate: step 2/2. The polypeptide is Probable 5-dehydro-4-deoxyglucarate dehydratase (Rhizobium rhizogenes (strain K84 / ATCC BAA-868) (Agrobacterium radiobacter)).